Reading from the N-terminus, the 396-residue chain is ATP phosphoribosyltransferase regulatory subunit (396 aa).

This sequence belongs to the class-II aminoacyl-tRNA synthetase family. HisZ subfamily. Heteromultimer composed of HisG and HisZ subunits.

The protein resides in the cytoplasm. Its pathway is amino-acid biosynthesis; L-histidine biosynthesis; L-histidine from 5-phospho-alpha-D-ribose 1-diphosphate: step 1/9. Required for the first step of histidine biosynthesis. May allow the feedback regulation of ATP phosphoribosyltransferase activity by histidine. The sequence is that of ATP phosphoribosyltransferase regulatory subunit from Alkaliphilus metalliredigens (strain QYMF).